The chain runs to 376 residues: Thymidine kinase (376 aa).

A disordered region spans residues 1–47; that stretch reads MASHAGQQHAPAFGQAARASGPTDGRAASRPSHRQGASEARGDPELP. 56–63 provides a ligand contact to ATP; sequence GPHGVGKT. E84 serves as the catalytic Proton acceptor. Residues Y102 and Q126 each contribute to the substrate site. Position 217 (R217) interacts with ATP. R223 contributes to the substrate binding site.

This sequence belongs to the herpesviridae thymidine kinase family. Homodimer.

The catalysed reaction is thymidine + ATP = dTMP + ADP + H(+). Catalyzes the transfer of the gamma-phospho group of ATP to thymidine to generate dTMP in the salvage pathway of pyrimidine synthesis. The dTMP serves as a substrate for DNA polymerase during viral DNA replication. Allows the virus to be reactivated and to grow in non-proliferative cells lacking a high concentration of phosphorylated nucleic acid precursors. This chain is Thymidine kinase, found in Human herpesvirus 2 (strain 333) (HHV-2).